We begin with the raw amino-acid sequence, 151 residues long: Arginine repressor (151 aa).

It belongs to the ArgR family.

It is found in the cytoplasm. Its pathway is amino-acid biosynthesis; L-arginine biosynthesis [regulation]. Its function is as follows. Regulates arginine biosynthesis genes. The sequence is that of Arginine repressor from Clostridium novyi (strain NT).